Here is a 245-residue protein sequence, read N- to C-terminus: Ribonuclease PH (245 aa).

Residues R86 and 124 to 126 (GTR) contribute to the phosphate site.

The protein belongs to the RNase PH family. Homohexameric ring arranged as a trimer of dimers.

It carries out the reaction tRNA(n+1) + phosphate = tRNA(n) + a ribonucleoside 5'-diphosphate. Phosphorolytic 3'-5' exoribonuclease that plays an important role in tRNA 3'-end maturation. Removes nucleotide residues following the 3'-CCA terminus of tRNAs; can also add nucleotides to the ends of RNA molecules by using nucleoside diphosphates as substrates, but this may not be physiologically important. Probably plays a role in initiation of 16S rRNA degradation (leading to ribosome degradation) during starvation. This chain is Ribonuclease PH, found in Bacillus cereus (strain ATCC 10987 / NRS 248).